We begin with the raw amino-acid sequence, 165 residues long: Small ribosomal subunit protein uS5 (165 aa).

In terms of domain architecture, S5 DRBM spans 13 to 76 (LEEKVLVVNR…EAAKKNLMKI (64 aa)).

The protein belongs to the universal ribosomal protein uS5 family. In terms of assembly, part of the 30S ribosomal subunit. Contacts proteins S4 and S8.

With S4 and S12 plays an important role in translational accuracy. In terms of biological role, located at the back of the 30S subunit body where it stabilizes the conformation of the head with respect to the body. The chain is Small ribosomal subunit protein uS5 from Chlamydia pneumoniae (Chlamydophila pneumoniae).